The chain runs to 602 residues: Multiple epidermal growth factor-like domains protein 9 (602 aa).

The signal sequence occupies residues 1–30 (MNGGAERAMRSLPSLGGLALLCCAAAAAAA). Over 31 to 514 (AVASAASAGN…LADVSWTQFN (484 aa)) the chain is Extracellular. The disordered stretch occupies residues 38–199 (AGNVTGGGGA…PATEAPSSPP (162 aa)). An N-linked (GlcNAc...) asparagine glycan is attached at N40. 2 stretches are compositionally biased toward low complexity: residues 68-85 (PRAT…PPRA) and 139-166 (APTR…TVPA). Pro residues predominate over residues 167–176 (PTTPRTPTPD). An N-linked (GlcNAc...) asparagine glycan is attached at N182. Pro residues predominate over residues 187–199 (PTPPATEAPSSPP). 20 disulfide bridges follow: C204/C217, C206/C224, C226/C235, C238/C251, C254/C266, C256/C272, C274/C283, C286/C298, C301/C310, C303/C317, C320/C329, C332/C346, C349/C360, C351/C371, C374/C383, C386/C397, C400/C415, C402/C422, C425/C434, and C437/C449. Laminin EGF-like domains lie at 204-253 (CNCS…LCQP), 254-300 (CDCS…GCLP), 301-348 (CQCN…ECLR), 349-399 (CPCS…ICRK), and 400-451 (CQCH…NCIK). 2 N-linked (GlcNAc...) asparagine glycosylation sites follow: N205 and N218. N245 carries an N-linked (GlcNAc...) asparagine glycan. Residue N267 is glycosylated (N-linked (GlcNAc...) asparagine). Residue N305 is glycosylated (N-linked (GlcNAc...) asparagine). N428 carries an N-linked (GlcNAc...) asparagine glycan. N-linked (GlcNAc...) asparagine glycans are attached at residues N468, N481, and N500. A helical transmembrane segment spans residues 515-535 (IIILTVIIIVVVLLMGFVGAV). The Cytoplasmic portion of the chain corresponds to 536 to 602 (YMYREYQNRK…LTTPIHNYKA (67 aa)).

The protein localises to the membrane. The chain is Multiple epidermal growth factor-like domains protein 9 (MEGF9) from Homo sapiens (Human).